The primary structure comprises 1902 residues: Rho GTPase-activating protein 21-B (1902 aa).

8 disordered regions span residues 1 to 44, 78 to 97, 284 to 317, 348 to 369, 409 to 450, 581 to 603, 613 to 632, and 879 to 902; these read MATR…EGFC, TSVKDEENGNRGVNAGRPRN, RTNRAGPLHRTGLADPSILKRTTSPSSSTPNVPM, PAAHAEESPSPTNHYASPGSHQ, NTTD…SQER, TRNFQNSSRAPHPRPALSDRSGF, IPTPYAAKPHSPSVRSDDGI, and KARENVQSSEDSESRKDSSSDVFS. The segment covering 10–22 has biased composition (polar residues); sequence EQQQEPSSPASEI. Residues 77-162 form the PDZ domain; the sequence is HTSVKDEENG…TLELSVMPKD (86 aa). Low complexity predominate over residues 305–317; sequence TTSPSSSTPNVPM. Residues 409-424 are compositionally biased toward polar residues; the sequence is NTTDYNQMLPNRSSGQ. The 114-residue stretch at 903–1016 folds into the PH domain; sequence DSNKEGFLYF…WIKAIQENGN (114 aa). Positions 1039–1063 are enriched in polar residues; it reads TMMSSSSNKTEPSPKAQRQTLSIRQ. Residues 1039–1095 are disordered; the sequence is TMMSSSSNKTEPSPKAQRQTLSIRQQFRAGKPDDDISPPKDKGSWRRIMKKPFEKKP. Basic and acidic residues predominate over residues 1068-1082; sequence GKPDDDISPPKDKGS. Residues 1103 to 1295 enclose the Rho-GAP domain; that stretch reads VRLDDCPPAH…TLIQKHDWFF (193 aa). Disordered stretches follow at residues 1306 to 1357, 1375 to 1394, 1494 to 1520, 1559 to 1704, 1729 to 1748, and 1803 to 1890; these read TVHE…GSGK, RKRKKQKDKPQPSSSEDELD, MSDSGTMLSTSSQASVQGSKPKVVSPE, VQSV…EPAW, QKANAAETRKKKNIRRRHTL, and TSTS…KLSG. Low complexity predominate over residues 1339-1357; the sequence is SDSATSDSAKSKGSWGSGK. Polar residues predominate over residues 1494–1511; sequence MSDSGTMLSTSSQASVQG. Composition is skewed to basic and acidic residues over residues 1575-1585 and 1601-1613; these read SELVSEGRPME and FDRRHQSKAEEPS. Polar residues predominate over residues 1614 to 1630; the sequence is RNVQVNSEGSPSCTEGS. Basic and acidic residues-rich tracts occupy residues 1634–1652 and 1661–1673; these read KMDRRRFSSHKLIECDTLS and TDSDCSAESKTEE. Positions 1737 to 1748 are enriched in basic residues; that stretch reads RKKKNIRRRHTL. Over residues 1865-1878 the composition is skewed to polar residues; sequence NGDSFQSKNKNNFS.

It is found in the golgi apparatus membrane. The protein localises to the cell junction. It localises to the cytoplasmic vesicle membrane. The protein resides in the cytoplasm. Its subcellular location is the cytoskeleton. Its function is as follows. GTPase-activating protein (GAP) for rhoa and cdc42. The chain is Rho GTPase-activating protein 21-B (arhgap21-b) from Xenopus laevis (African clawed frog).